Here is a 254-residue protein sequence, read N- to C-terminus: UPF0173 protein YddR (254 aa).

It belongs to the UPF0173 family.

The protein is UPF0173 protein YddR (yddR) of Bacillus subtilis (strain 168).